A 111-amino-acid polypeptide reads, in one-letter code: Cytochrome c oxidase subunit 6A1, mitochondrial (111 aa).

A mitochondrion-targeting transit peptide spans 1 to 26 (MASAVLSASRVSRPLGRALPGLRRPM). At 27–36 (SSGAHGEEGS) the chain is on the mitochondrial matrix side. Residues 37–61 (ARMWKALTYFVALPGVGVSMLNVFL) traverse the membrane as a helical segment. The Mitochondrial intermembrane portion of the chain corresponds to 62–111 (KSRHEEHERPPFVAYPHLRIRTKPFPWGDGNHTLFHNPHVNPLPTGYEDE).

This sequence belongs to the cytochrome c oxidase subunit 6A family. Component of the cytochrome c oxidase (complex IV, CIV), a multisubunit enzyme composed of 14 subunits. The complex is composed of a catalytic core of 3 subunits MT-CO1, MT-CO2 and MT-CO3, encoded in the mitochondrial DNA, and 11 supernumerary subunits COX4I, COX5A, COX5B, COX6A, COX6B, COX6C, COX7A, COX7B, COX7C, COX8 and NDUFA4, which are encoded in the nuclear genome. The complex exists as a monomer or a dimer and forms supercomplexes (SCs) in the inner mitochondrial membrane with NADH-ubiquinone oxidoreductase (complex I, CI) and ubiquinol-cytochrome c oxidoreductase (cytochrome b-c1 complex, complex III, CIII), resulting in different assemblies (supercomplex SCI(1)III(2)IV(1) and megacomplex MCI(2)III(2)IV(2)).

The protein localises to the mitochondrion inner membrane. It functions in the pathway energy metabolism; oxidative phosphorylation. Its function is as follows. Component of the cytochrome c oxidase, the last enzyme in the mitochondrial electron transport chain which drives oxidative phosphorylation. The respiratory chain contains 3 multisubunit complexes succinate dehydrogenase (complex II, CII), ubiquinol-cytochrome c oxidoreductase (cytochrome b-c1 complex, complex III, CIII) and cytochrome c oxidase (complex IV, CIV), that cooperate to transfer electrons derived from NADH and succinate to molecular oxygen, creating an electrochemical gradient over the inner membrane that drives transmembrane transport and the ATP synthase. Cytochrome c oxidase is the component of the respiratory chain that catalyzes the reduction of oxygen to water. Electrons originating from reduced cytochrome c in the intermembrane space (IMS) are transferred via the dinuclear copper A center (CU(A)) of subunit 2 and heme A of subunit 1 to the active site in subunit 1, a binuclear center (BNC) formed by heme A3 and copper B (CU(B)). The BNC reduces molecular oxygen to 2 water molecules unsing 4 electrons from cytochrome c in the IMS and 4 protons from the mitochondrial matrix. This is Cytochrome c oxidase subunit 6A1, mitochondrial (Cox6a1) from Mus musculus (Mouse).